The following is a 389-amino-acid chain: Ribonucleoside-diphosphate reductase subunit M2 (389 aa).

Residue serine 20 is modified to Phosphoserine. A Phosphothreonine modification is found at threonine 33. Positions 49 to 51 (RRI) match the Cy motif. Positions 138, 169, and 172 each coordinate Fe cation. The active site involves tyrosine 176. Positions 232, 266, and 269 each coordinate Fe cation.

It belongs to the ribonucleoside diphosphate reductase small chain family. In terms of assembly, heterodimer of a large and a small subunit. Interacts (via Cy motif and when phosphorylated at Thr-33) with CCNF; the interaction occurs exclusively in G2 and early M. It depends on Fe cation as a cofactor. Post-translationally, phosphorylation on Ser-20 relieves the inhibitory effect on Wnt signaling. Phosphorylated on Thr-33 by CDK1 and CDK2; predominantly in G2 and M phase. Ubiquitinated by the SCF(CCNF) E3 ubiquitin-protein ligase complex; leading to its degradation by the proteasome.

The protein resides in the cytoplasm. It is found in the nucleus. It carries out the reaction a 2'-deoxyribonucleoside 5'-diphosphate + [thioredoxin]-disulfide + H2O = a ribonucleoside 5'-diphosphate + [thioredoxin]-dithiol. Functionally, provides the precursors necessary for DNA synthesis. Catalyzes the biosynthesis of deoxyribonucleotides from the corresponding ribonucleotides. Inhibits Wnt signaling. In Macaca fascicularis (Crab-eating macaque), this protein is Ribonucleoside-diphosphate reductase subunit M2 (RRM2).